The chain runs to 139 residues: Putative pre-16S rRNA nuclease (139 aa).

Belongs to the YqgF nuclease family.

It localises to the cytoplasm. Its function is as follows. Could be a nuclease involved in processing of the 5'-end of pre-16S rRNA. The sequence is that of Putative pre-16S rRNA nuclease from Legionella pneumophila subsp. pneumophila (strain Philadelphia 1 / ATCC 33152 / DSM 7513).